The following is a 468-amino-acid chain: Putative proline/betaine transporter (468 aa).

A run of 12 helical transmembrane segments spans residues 20 to 42 (VFAT…YTTA), 63 to 83 (FAAL…FGII), 91 to 111 (VVLT…GVLP), 115 to 135 (MIGL…GFST), 164 to 184 (IGTL…SFFL), 191 to 211 (AWGW…GLYL), 246 to 266 (ILVC…VTAY), 284 to 304 (VLIT…GKLA), 312 to 332 (VFLI…SLLN), 336 to 356 (LPFI…YEAT), 376 to 396 (VTFN…NSWL), and 403 to 423 (IYAP…VIAV).

The protein belongs to the major facilitator superfamily. Metabolite:H+ Symporter (MHS) family (TC 2.A.1.6) family.

It is found in the cell membrane. Its function is as follows. May be a proton symporter involved in the uptake of osmolytes such as proline and glycine betaine. This chain is Putative proline/betaine transporter (proP), found in Staphylococcus haemolyticus (strain JCSC1435).